Reading from the N-terminus, the 181-residue chain is MVDFDALHAIIAPEAEAMGLALVRVAFFGGDSDPTLQVMAERPDTRQLTIDDCADLSRRISDRLDALEEAGQDPIDVAYRLEVSSPGIDRPLTRPADFADWAGHEAKIALKEKLDGRQRFNGTLVGIDGDVVTISDKEGVEHKLPFGAIDTAKLVLTDKLIAATVPLSAEGADEMEEEGQD.

This sequence belongs to the RimP family.

Its subcellular location is the cytoplasm. Required for maturation of 30S ribosomal subunits. The polypeptide is Ribosome maturation factor RimP (Sphingopyxis alaskensis (strain DSM 13593 / LMG 18877 / RB2256) (Sphingomonas alaskensis)).